A 220-amino-acid polypeptide reads, in one-letter code: Protein CREG1 (220 aa).

Residues 1 to 31 (MAARAPELARSLLAALLAPALVALLVSPASG) form the signal peptide. The disordered stretch occupies residues 30 to 53 (SGRGGRDHGDWDVDRRLPPLPPRE). Residues 33-53 (GGRDHGDWDVDRRLPPLPPRE) show a composition bias toward basic and acidic residues. 2 N-linked (GlcNAc...) asparagine glycosylation sites follow: Asn160 and Asn216.

The protein belongs to the CREG family. In terms of assembly, homodimer. Interacts with IGF2R; the interaction is dependent on glycosylation. Post-translationally, N-glycosylated. As to expression, widely expressed.

The protein localises to the secreted. Its function is as follows. May contribute to the transcriptional control of cell growth and differentiation. Antagonizes transcriptional activation and cellular transformation by the adenovirus E1A protein. The transcriptional control activity of cell growth requires interaction with IGF2R. This Mus musculus (Mouse) protein is Protein CREG1 (Creg1).